A 155-amino-acid polypeptide reads, in one-letter code: MKLLVLCLFAMMATLAVSRHRFRFIPHKYIRKEFEVALKVEIIAGFDRTLVKWLRVHGGRLSTVQKKALYFVNRRYMQTHWQNYMLWIVRKTDALGRPPVVADYSRLGAEIGRRIDMAYFYNFLNGRNMIPKYLPYMEEINRMRPADVPVANRGK.

Residues 1-18 (MKLLVLCLFAMMATLAVS) form the signal peptide.

In terms of assembly, monomer. Homodimer. Molecules associate into dimers and then rapidly dissociate again. Interacts (as a monomer) with the egg vitelline layer protein VERL (via VERL repeats); each VERL chain can bind multiple copies of lysin. As to expression, sperm (at protein level).

The protein resides in the cytoplasmic vesicle. Its subcellular location is the secretory vesicle. It is found in the acrosome lumen. Functionally, creates a 3 um hole in the egg vitelline layer through which the sperm passes. Does not have enzyme activity. Species-specific interaction between the sperm protein lysin and the egg protein VERL exposes a basic surface on lysin that may dissociate the egg vitelline layer via electrostatic repulsion. Plays a role in ensuring species-specific fertilization. The protein is Egg-lysin of Haliotis corrugata (Pink abalone).